The chain runs to 444 residues: Aspartate--tRNA(Asp/Asn) ligase (444 aa).

Glu176 serves as a coordination point for L-aspartate. An aspartate region spans residues Gln198 to Lys201. Arg220 contacts L-aspartate. Residues Arg220–Glu222, Arg228–Leu230, and Glu367 contribute to the ATP site. Residues Glu367 and Ser370 each coordinate Mg(2+). Ser370 and Arg374 together coordinate L-aspartate. ATP is bound at residue Gly415–Arg418.

It belongs to the class-II aminoacyl-tRNA synthetase family. Type 2 subfamily. As to quaternary structure, homodimer. It depends on Mg(2+) as a cofactor.

The protein localises to the cytoplasm. It carries out the reaction tRNA(Asx) + L-aspartate + ATP = L-aspartyl-tRNA(Asx) + AMP + diphosphate. Functionally, aspartyl-tRNA synthetase with relaxed tRNA specificity since it is able to aspartylate not only its cognate tRNA(Asp) but also tRNA(Asn). Reaction proceeds in two steps: L-aspartate is first activated by ATP to form Asp-AMP and then transferred to the acceptor end of tRNA(Asp/Asn). This is Aspartate--tRNA(Asp/Asn) ligase from Methanosarcina acetivorans (strain ATCC 35395 / DSM 2834 / JCM 12185 / C2A).